The following is a 438-amino-acid chain: Trigger factor (438 aa).

One can recognise a PPIase FKBP-type domain in the interval G163–R248.

The protein belongs to the FKBP-type PPIase family. Tig subfamily.

It is found in the cytoplasm. The catalysed reaction is [protein]-peptidylproline (omega=180) = [protein]-peptidylproline (omega=0). In terms of biological role, involved in protein export. Acts as a chaperone by maintaining the newly synthesized protein in an open conformation. Functions as a peptidyl-prolyl cis-trans isomerase. The sequence is that of Trigger factor from Syntrophomonas wolfei subsp. wolfei (strain DSM 2245B / Goettingen).